The following is a 254-amino-acid chain: MKIGVYGASGRIGKLLLEELKGGYKGLELSSVFVRQKCETDFSSFSHAPLVTNDLKAFVRACECVIDFSLPKGVDNLLEALLECPKILVSGTTGLEKETLEKMQQLALKAPLLHAHNMSLGIMMLNQLAFLASLKLKDADIEIVETHHNLKKDAPSGTALSLYETCAKARGYDEKNALTTHREGLRSKESIGIAALRGGDVAGKHTIGFYLEGEYIELSHTATNRSIFAKGALEVALWLKDKAAKKYEINEMFG.

7-12 (GASGRI) serves as a coordination point for NAD(+). Arginine 35 contacts NADP(+). NAD(+) is bound by residues 91–93 (GTT) and 115–118 (AHNM). The Proton donor/acceptor role is filled by histidine 147. Histidine 148 is a (S)-2,3,4,5-tetrahydrodipicolinate binding site. The Proton donor role is filled by lysine 151. A (S)-2,3,4,5-tetrahydrodipicolinate-binding site is contributed by 157–158 (GT).

Belongs to the DapB family.

It is found in the cytoplasm. The enzyme catalyses (S)-2,3,4,5-tetrahydrodipicolinate + NAD(+) + H2O = (2S,4S)-4-hydroxy-2,3,4,5-tetrahydrodipicolinate + NADH + H(+). It catalyses the reaction (S)-2,3,4,5-tetrahydrodipicolinate + NADP(+) + H2O = (2S,4S)-4-hydroxy-2,3,4,5-tetrahydrodipicolinate + NADPH + H(+). Its pathway is amino-acid biosynthesis; L-lysine biosynthesis via DAP pathway; (S)-tetrahydrodipicolinate from L-aspartate: step 4/4. Catalyzes the conversion of 4-hydroxy-tetrahydrodipicolinate (HTPA) to tetrahydrodipicolinate. This Helicobacter pylori (strain Shi470) protein is 4-hydroxy-tetrahydrodipicolinate reductase.